Here is a 205-residue protein sequence, read N- to C-terminus: Probable GTP-binding protein EngB (205 aa).

The EngB-type G domain maps to 27–201 (TGIEIAFAGR…AAKLDFWFSP (175 aa)). GTP contacts are provided by residues 35–42 (GRSNAGKS), 62–66 (GRTQL), 80–83 (DLPG), 147–150 (TKAD), and 180–182 (FSA). Positions 42 and 64 each coordinate Mg(2+).

It belongs to the TRAFAC class TrmE-Era-EngA-EngB-Septin-like GTPase superfamily. EngB GTPase family. Requires Mg(2+) as cofactor.

In terms of biological role, necessary for normal cell division and for the maintenance of normal septation. This is Probable GTP-binding protein EngB from Haemophilus influenzae (strain PittEE).